Consider the following 1062-residue polypeptide: Translation initiation factor IF-2 (1062 aa).

The interval 34-463 (SASSTVEAPV…RMGAMVPRGN (430 aa)) is disordered. The segment covering 76-121 (PTPPSRPGLAPRPGPRPVPGRPGPLGRPGPATPAPSPSPASPPLPA) has biased composition (pro residues). The segment covering 122–153 (SPVQASPVQASPVQASPTSAPAAPRPAAASAV) has biased composition (low complexity). Pro residues predominate over residues 154 to 178 (PAPPMPSVPSAPSGPRPGPNAPRPG). A compositionally biased stretch (gly residues) spans 198 to 214 (TAGGPTAGGPTAGGPTA). The segment covering 294 to 305 (RPTPGGMPPRPG) has biased composition (pro residues). 2 stretches are compositionally biased toward gly residues: residues 307 to 324 (PRSG…GTGG) and 344 to 430 (PGGG…GGRG). Positions 431–442 (RPGRQRKSKRAK) are enriched in basic residues. The tr-type G domain occupies 555 to 727 (SRPPVVTVMG…IVLTADASLD (173 aa)). Positions 564-571 (GHVDHGKT) are G1. 564 to 571 (GHVDHGKT) contributes to the GTP binding site. Positions 589-593 (GITQH) are G2. A G3 region spans residues 614–617 (DTPG). Residues 614–618 (DTPGH) and 668–671 (NKVD) contribute to the GTP site. The segment at 668–671 (NKVD) is G4. A G5 region spans residues 704-706 (SAR).

This sequence belongs to the TRAFAC class translation factor GTPase superfamily. Classic translation factor GTPase family. IF-2 subfamily.

Its subcellular location is the cytoplasm. Functionally, one of the essential components for the initiation of protein synthesis. Protects formylmethionyl-tRNA from spontaneous hydrolysis and promotes its binding to the 30S ribosomal subunits. Also involved in the hydrolysis of GTP during the formation of the 70S ribosomal complex. The polypeptide is Translation initiation factor IF-2 (Frankia casuarinae (strain DSM 45818 / CECT 9043 / HFP020203 / CcI3)).